A 370-amino-acid chain; its full sequence is Glutamate 5-kinase (370 aa).

ATP is bound at residue lysine 17. Residues serine 57, aspartate 144, and asparagine 156 each contribute to the substrate site. ATP contacts are provided by residues serine 176–aspartate 177 and threonine 220–lysine 226. Residues serine 282–proline 360 enclose the PUA domain.

Belongs to the glutamate 5-kinase family.

The protein resides in the cytoplasm. It carries out the reaction L-glutamate + ATP = L-glutamyl 5-phosphate + ADP. Its pathway is amino-acid biosynthesis; L-proline biosynthesis; L-glutamate 5-semialdehyde from L-glutamate: step 1/2. Functionally, catalyzes the transfer of a phosphate group to glutamate to form L-glutamate 5-phosphate. The polypeptide is Glutamate 5-kinase (Mycolicibacterium gilvum (strain PYR-GCK) (Mycobacterium gilvum (strain PYR-GCK))).